Here is a 614-residue protein sequence, read N- to C-terminus: Replication protein A 70 kDa DNA-binding subunit (614 aa).

Positions 112-178 are disordered; that stretch reads GNPVPYNEGQ…SSVKTPGGTQ (67 aa). Polar residues-rich tracts occupy residues 120–130 and 158–178; these read GQGQQRSSAPT and PSNQFSKASAPSSVKTPGGTQ. A DNA-binding region (OB) is located at residues 194 to 278; the sequence is WTICARVTQK…VKNDYEITFN (85 aa). The C4-type zinc finger occupies 478–500; that stretch reads CPSQDCNKKVIDQQNGLYRCEKC.

Belongs to the replication factor A protein 1 family. Component of the heterotrimeric canonical replication protein A complex (RPA).

The protein localises to the nucleus. Its subcellular location is the PML body. In terms of biological role, as part of the heterotrimeric replication protein A complex (RPA/RP-A), binds and stabilizes single-stranded DNA intermediates, that form during DNA replication or upon DNA stress. It prevents their reannealing and in parallel, recruits and activates different proteins and complexes involved in DNA metabolism. Thereby, it plays an essential role both in DNA replication and the cellular response to DNA damage. The protein is Replication protein A 70 kDa DNA-binding subunit (RPA1) of Gallus gallus (Chicken).